A 102-amino-acid chain; its full sequence is Putative septation protein SpoVG 1 (102 aa).

Belongs to the SpoVG family.

Could be involved in septation. This chain is Putative septation protein SpoVG 1, found in Listeria monocytogenes serotype 4b (strain F2365).